A 309-amino-acid chain; its full sequence is Glutaminase (309 aa).

Substrate is bound by residues serine 64, asparagine 114, glutamate 160, asparagine 167, tyrosine 191, tyrosine 243, and valine 261.

Belongs to the glutaminase family. In terms of assembly, homotetramer.

It catalyses the reaction L-glutamine + H2O = L-glutamate + NH4(+). The polypeptide is Glutaminase (Rhizobium rhizogenes (strain K84 / ATCC BAA-868) (Agrobacterium radiobacter)).